The following is a 397-amino-acid chain: Histidinol-phosphate aminotransferase (397 aa).

K247 bears the N6-(pyridoxal phosphate)lysine mark.

It belongs to the class-II pyridoxal-phosphate-dependent aminotransferase family. Histidinol-phosphate aminotransferase subfamily. In terms of assembly, homodimer. Pyridoxal 5'-phosphate serves as cofactor.

It catalyses the reaction L-histidinol phosphate + 2-oxoglutarate = 3-(imidazol-4-yl)-2-oxopropyl phosphate + L-glutamate. The protein operates within amino-acid biosynthesis; L-histidine biosynthesis; L-histidine from 5-phospho-alpha-D-ribose 1-diphosphate: step 7/9. This chain is Histidinol-phosphate aminotransferase, found in Frankia casuarinae (strain DSM 45818 / CECT 9043 / HFP020203 / CcI3).